Reading from the N-terminus, the 351-residue chain is Anthranilate phosphoribosyltransferase (351 aa).

Residues Gly-80, Gly-83–Asp-84, Thr-88, Asn-90–Thr-93, Lys-108–Ser-116, and Ser-120 contribute to the 5-phospho-alpha-D-ribose 1-diphosphate site. Residue Gly-80 participates in anthranilate binding. Ser-92 contacts Mg(2+). Asn-111 is a binding site for anthranilate. An anthranilate-binding site is contributed by Arg-166. The Mg(2+) site is built by Asp-229 and Glu-230.

The protein belongs to the anthranilate phosphoribosyltransferase family. In terms of assembly, homodimer. Requires Mg(2+) as cofactor.

It carries out the reaction N-(5-phospho-beta-D-ribosyl)anthranilate + diphosphate = 5-phospho-alpha-D-ribose 1-diphosphate + anthranilate. It participates in amino-acid biosynthesis; L-tryptophan biosynthesis; L-tryptophan from chorismate: step 2/5. Functionally, catalyzes the transfer of the phosphoribosyl group of 5-phosphorylribose-1-pyrophosphate (PRPP) to anthranilate to yield N-(5'-phosphoribosyl)-anthranilate (PRA). This chain is Anthranilate phosphoribosyltransferase, found in Pelodictyon phaeoclathratiforme (strain DSM 5477 / BU-1).